Consider the following 147-residue polypeptide: Elongation factor Tu (147 aa).

The protein belongs to the GTP-binding elongation factor family. EF-Tu/EF-1A subfamily. Monomer.

It localises to the cytoplasm. In terms of biological role, this protein promotes the GTP-dependent binding of aminoacyl-tRNA to the A-site of ribosomes during protein biosynthesis. The sequence is that of Elongation factor Tu (tuf) from Fructilactobacillus sanfranciscensis (Lactobacillus sanfranciscensis).